Reading from the N-terminus, the 823-residue chain is MDLVDPSQSAAAAAGTQLVKDEVAEKCQKLFQDFLEEFQGSDGELKYQSDAEELIRPERNTLLVSFVDLEQFNQQLATTIQEEFYRVYPYLCRAVRAFARDHGNIPQNKEFYVAFQDLPTRHKIRELTTPRIGSLLRISAQVVRTHPVHPELVSGTFLCLDCQTLVRDVEQQFKYTQPSICRNPVCANRRRFMLDTNKSRFVDFQKVRIQETQAELPRGSIPRSVEVILRAEAVESCQAGDRCDFTGSLIVVPDISQLSTPGVRAETSSRVGGREGYEAEGVQGLRALGVRDLSYKLVFLACYVCPTNPRFGGKELHEEDMTAESIKNQMSVKEWEKVFEMSQDKNLYHNLCTSLFPTVHGNDEVKRGILLMLFGGVPKSTMEGTSLRGDINVCVVGDPSTAKSQFLKHVEEFSPRAVYTSGKASTAAGLTAAVVKDEESHEFVIEAGALMLADNGVCCIDEFDKMDTKDQVAIHEAMEQQTISITKAGVKATLNARTSILAAANPVGGRYDRAKSLKQNVNLSAPIMSRFDLFFILVDECNEVTDYAIARRIVDLHSRIEESIDRVYTVDEVRRYLLFARQFKPKISKESADFIVEQYKRLRQRDGSGVTKSAWRITVRQLESMIRLSEGMARMHCSDEVQPKHVKEAFRLLNKSIIRVETPDVNLDQDDEHEPEDETQEGTNGDAEVPNGVNGHVNGINGHSQESNAAAAKPSLRLNFAEYKRISNLLVQQLRKMEDEDETSQRRSELMNWYLKEIESEIDSEEELINRKQIIDKVIHRLVHYDQILIELTQTELKGTGDEVVAKEEDPYLVVNPNYILED.

Residues 159 to 186 (CLDCQTLVRDVEQQFKYTQPSICRNPVC) form a C4-type zinc finger. An MCM domain is found at 347–554 (LYHNLCTSLF…TDYAIARRIV (208 aa)). An ATP-binding site is contributed by 397–404 (GDPSTAKS). Residues 529-532 (SRFD) carry the Arginine finger motif. Residues 663-710 (PDVNLDQDDEHEPEDETQEGTNGDAEVPNGVNGHVNGINGHSQESNAA) are disordered. The span at 667-680 (LDQDDEHEPEDETQ) shows a compositional bias: acidic residues. The segment covering 691-703 (NGVNGHVNGINGH) has biased composition (low complexity).

Belongs to the MCM family. As to quaternary structure, component of the mcm2-7 complex (RLF-M). The complex forms a toroidal hexameric ring with the proposed subunit order mcm2-mcm6-mcm4-mcm7-mcm3-mcm5 (By simililarity). Begins to associate with zmcm3, mcm4 and mcm7 into mcm complexes at the neurula stage. May replace mmcm6 in the complex that functions during licensing of DNA replication.

It is found in the nucleus. It carries out the reaction ATP + H2O = ADP + phosphate + H(+). Functionally, acts as a component of the mcm2-7 complex (mcm complex) which is the putative replicative helicase essential for 'once per cell cycle' DNA replication initiation and elongation in eukaryotic cells. The active ATPase sites in the mcm2-7 ring are formed through the interaction surfaces of two neighboring subunits such that a critical structure of a conserved arginine finger motif is provided in trans relative to the ATP-binding site of the Walker A box of the adjacent subunit. The six ATPase active sites, however, are likely to contribute differentially to the complex helicase activity. The existence of maternal and zygotic forms of mcm3 and mcm6 suggests that specific forms of mcm2-7 complexes may be used during different stages of development. May replace mmcm6 in the mcm2-7 complex. This is Zygotic DNA replication licensing factor mcm6-A (zmcm6-a) from Xenopus laevis (African clawed frog).